The sequence spans 232 residues: Phosphatidylserine decarboxylase proenzyme (232 aa).

Residue Ser-201 is the Schiff-base intermediate with substrate; via pyruvic acid of the active site. The residue at position 201 (Ser-201) is a Pyruvic acid (Ser); by autocatalysis.

The protein belongs to the phosphatidylserine decarboxylase family. PSD-A subfamily. In terms of assembly, heterodimer of a large membrane-associated beta subunit and a small pyruvoyl-containing alpha subunit. The cofactor is pyruvate. Post-translationally, is synthesized initially as an inactive proenzyme. Formation of the active enzyme involves a self-maturation process in which the active site pyruvoyl group is generated from an internal serine residue via an autocatalytic post-translational modification. Two non-identical subunits are generated from the proenzyme in this reaction, and the pyruvate is formed at the N-terminus of the alpha chain, which is derived from the carboxyl end of the proenzyme. The post-translation cleavage follows an unusual pathway, termed non-hydrolytic serinolysis, in which the side chain hydroxyl group of the serine supplies its oxygen atom to form the C-terminus of the beta chain, while the remainder of the serine residue undergoes an oxidative deamination to produce ammonia and the pyruvoyl prosthetic group on the alpha chain.

It is found in the cell membrane. The enzyme catalyses a 1,2-diacyl-sn-glycero-3-phospho-L-serine + H(+) = a 1,2-diacyl-sn-glycero-3-phosphoethanolamine + CO2. It functions in the pathway phospholipid metabolism; phosphatidylethanolamine biosynthesis; phosphatidylethanolamine from CDP-diacylglycerol: step 2/2. Catalyzes the formation of phosphatidylethanolamine (PtdEtn) from phosphatidylserine (PtdSer). This Mycolicibacterium smegmatis (strain ATCC 700084 / mc(2)155) (Mycobacterium smegmatis) protein is Phosphatidylserine decarboxylase proenzyme.